The primary structure comprises 284 residues: Riboflavin transporter (284 aa).

EamA domains lie at Val2–Ile129 and Leu141–Leu273. The next 8 membrane-spanning stretches (helical) occupy residues Ser26–Val46, Phe58–Ala78, Val82–Ala102, Leu115–Ser135, Tyr136–Met156, Ala167–Ala187, Ile195–Leu215, and Gly247–Ile267.

Belongs to the drug/metabolite transporter (DMT) superfamily. 10 TMS drug/metabolite exporter (DME) (TC 2.A.7.3) family.

It is found in the cell membrane. Its function is as follows. Transports riboflavin into the cell. The polypeptide is Riboflavin transporter (Brucella anthropi (strain ATCC 49188 / DSM 6882 / CCUG 24695 / JCM 21032 / LMG 3331 / NBRC 15819 / NCTC 12168 / Alc 37) (Ochrobactrum anthropi)).